The primary structure comprises 363 residues: Methylthioribose-1-phosphate isomerase (363 aa).

The Proton donor role is filled by Asp253.

This sequence belongs to the eIF-2B alpha/beta/delta subunits family. MtnA subfamily.

Its subcellular location is the cytoplasm. The protein resides in the nucleus. It carries out the reaction 5-(methylsulfanyl)-alpha-D-ribose 1-phosphate = 5-(methylsulfanyl)-D-ribulose 1-phosphate. It participates in amino-acid biosynthesis; L-methionine biosynthesis via salvage pathway; L-methionine from S-methyl-5-thio-alpha-D-ribose 1-phosphate: step 1/6. Its function is as follows. Catalyzes the interconversion of methylthioribose-1-phosphate (MTR-1-P) into methylthioribulose-1-phosphate (MTRu-1-P). The chain is Methylthioribose-1-phosphate isomerase from Drosophila grimshawi (Hawaiian fruit fly).